A 72-amino-acid polypeptide reads, in one-letter code: Large ribosomal subunit protein uL29 (72 aa).

This sequence belongs to the universal ribosomal protein uL29 family.

This Chlamydia pneumoniae (Chlamydophila pneumoniae) protein is Large ribosomal subunit protein uL29 (rpmC).